The following is a 261-amino-acid chain: Cytochrome c oxidase subunit 3 (261 aa).

Topologically, residues 1 to 15 are mitochondrial matrix; the sequence is MTHQTHAYHMVNPSP. The helical transmembrane segment at 16–34 threads the bilayer; the sequence is WPLTGALSALLMTSGLAMW. Topologically, residues 35 to 40 are mitochondrial intermembrane; the sequence is FHFNST. Residues 41–66 form a helical membrane-spanning segment; the sequence is ILLMIGLTTNTLTMYQWWRDVIREST. Residues 67–72 lie on the Mitochondrial matrix side of the membrane; it reads FQGHHT. A helical membrane pass occupies residues 73–105; the sequence is PTVQKGLRYGMILFIISEVLFFTGFFWAFYHSS. Over 106-128 the chain is Mitochondrial intermembrane; sequence LAPTPELGGCWPPTGIHPLNPLE. Residues 129–152 traverse the membrane as a helical segment; sequence VPLLNTSVLLASGVSITWAHHSLM. Residues 153–155 are Mitochondrial matrix-facing; that stretch reads EGN. Residues 156-183 form a helical membrane-spanning segment; the sequence is RYPMLQALFITIALGVYFTLLQASEYYE. Residues 184–190 are Mitochondrial intermembrane-facing; that stretch reads APFTISD. The chain crosses the membrane as a helical span at residues 191-223; it reads GIYGSTFFVATGFHGLHVIIGSTFLIVCFFRQL. Topologically, residues 224-232 are mitochondrial matrix; sequence KFHFTSNHH. The chain crosses the membrane as a helical span at residues 233–256; that stretch reads FGFEAAAWYWHFVDVVWLFLYVSI. Residues 257-261 are Mitochondrial intermembrane-facing; the sequence is YWWGS.

Belongs to the cytochrome c oxidase subunit 3 family. Component of the cytochrome c oxidase (complex IV, CIV), a multisubunit enzyme composed of 14 subunits. The complex is composed of a catalytic core of 3 subunits MT-CO1, MT-CO2 and MT-CO3, encoded in the mitochondrial DNA, and 11 supernumerary subunits COX4I, COX5A, COX5B, COX6A, COX6B, COX6C, COX7A, COX7B, COX7C, COX8 and NDUFA4, which are encoded in the nuclear genome. The complex exists as a monomer or a dimer and forms supercomplexes (SCs) in the inner mitochondrial membrane with NADH-ubiquinone oxidoreductase (complex I, CI) and ubiquinol-cytochrome c oxidoreductase (cytochrome b-c1 complex, complex III, CIII), resulting in different assemblies (supercomplex SCI(1)III(2)IV(1) and megacomplex MCI(2)III(2)IV(2)).

The protein localises to the mitochondrion inner membrane. It catalyses the reaction 4 Fe(II)-[cytochrome c] + O2 + 8 H(+)(in) = 4 Fe(III)-[cytochrome c] + 2 H2O + 4 H(+)(out). Component of the cytochrome c oxidase, the last enzyme in the mitochondrial electron transport chain which drives oxidative phosphorylation. The respiratory chain contains 3 multisubunit complexes succinate dehydrogenase (complex II, CII), ubiquinol-cytochrome c oxidoreductase (cytochrome b-c1 complex, complex III, CIII) and cytochrome c oxidase (complex IV, CIV), that cooperate to transfer electrons derived from NADH and succinate to molecular oxygen, creating an electrochemical gradient over the inner membrane that drives transmembrane transport and the ATP synthase. Cytochrome c oxidase is the component of the respiratory chain that catalyzes the reduction of oxygen to water. Electrons originating from reduced cytochrome c in the intermembrane space (IMS) are transferred via the dinuclear copper A center (CU(A)) of subunit 2 and heme A of subunit 1 to the active site in subunit 1, a binuclear center (BNC) formed by heme A3 and copper B (CU(B)). The BNC reduces molecular oxygen to 2 water molecules using 4 electrons from cytochrome c in the IMS and 4 protons from the mitochondrial matrix. This chain is Cytochrome c oxidase subunit 3 (MT-CO3), found in Raphicerus melanotis (Cape grysbok).